Consider the following 276-residue polypeptide: MTSFRLALIQLQISSIKSDNVTRACSFIREAATQGAKIVSLPECFNSPYGAKYFPEYAEKIPGESTQKLSEVAKECSIYLIGGSIPEEDAGKLYNTCAVFGPDGTLLAKYRKIHLFDIDVPGKITFQESKTLSPGDSFSTFDTPYCRVGLGICYDMRFAELAQIYAQRGCQLLVYPGAFNLTTGPAHWELLQRSRAVDNQVYVATASPARDDKASYVAWGHSTVVNPWGEVLAKAGTEEAIVYSDIDLKKLAEIRQQIPVFRQKRSDLYAVEMKKP.

Residues 4-248 enclose the CN hydrolase domain; that stretch reads FRLALIQLQI…EAIVYSDIDL (245 aa). Ser-26 carries the post-translational modification Phosphoserine. Glu-43 (proton acceptor) is an active-site residue. Lys-68 carries the post-translational modification N6-acetyllysine; alternate. Lys-68 bears the N6-succinyllysine; alternate mark. The Proton donor role is filled by Lys-112. Residues Lys-123 and Lys-130 each carry the N6-succinyllysine modification. Cys-153 functions as the Nucleophile in the catalytic mechanism.

Homodimer. In terms of tissue distribution, detected in fetal brain (at protein level). Ubiquitous. Detected in heart, brain, placenta, lung, liver, skeletal muscle, kidney, pancreas, prostate, spleen, thymus, prostate, testis, ovary, small intestine and colon.

It is found in the cytoplasm. It catalyses the reaction a monoamide of a dicarboxylate + H2O = a dicarboxylate + NH4(+). It carries out the reaction 2-oxoglutaramate + H2O = 2-oxoglutarate + NH4(+). The catalysed reaction is 2-oxosuccinamate + H2O = oxaloacetate + NH4(+). Has omega-amidase activity. The role of omega-amidase is to remove potentially toxic intermediates by converting 2-oxoglutaramate and 2-oxosuccinamate to biologically useful 2-oxoglutarate and oxaloacetate, respectively. The sequence is that of Omega-amidase NIT2 (NIT2) from Homo sapiens (Human).